A 705-amino-acid polypeptide reads, in one-letter code: Frizzled-4 (705 aa).

Residues 1–22 (MKPTCILCLLVVILLHPRISKS) form the signal peptide. Residues 21–37 (KSSTSGNPSASSSSSSP) show a composition bias toward low complexity. Residues 21 to 40 (KSSTSGNPSASSSSSSPPEI) form a disordered region. Over 23 to 233 (STSGNPSASS…FTPAEKHLAE (211 aa)) the chain is Extracellular. Residues 41–163 (PAFRQCETIR…NNHETMCMEG (123 aa)) form the FZ domain. Cystine bridges form between C46–C107, C54–C100, C91–C130, C119–C160, and C123–C147. N60 carries an N-linked (GlcNAc...) asparagine glycan. A helical membrane pass occupies residues 234–254 (IWVSTWAYAALGLALVATVCL). Residues 255–270 (LASDGSRLASAKWSRL) are Cytoplasmic-facing. The helical transmembrane segment at 271 to 291 (LSPLIWCHNMVTLGWAVRFMV) threads the bilayer. Topologically, residues 292–322 (GRTGTACGTDPQAPNESLLTVDGLSNASCAS) are extracellular. N306 and N317 each carry an N-linked (GlcNAc...) asparagine glycan. A helical membrane pass occupies residues 323-343 (VFLMRYYFGMAACAWWAVLCL). Residues 344–386 (GWHRDIRRHSPDSKGHVVIPSNFGGSPAKRNSAKTAQQDLTQN) are Cytoplasmic-facing. Residues 387 to 407 (NFVCFVAWGLPAFQTSAVIVA) traverse the membrane as a helical segment. Topologically, residues 408–430 (RFVDADELLGACFVGNQSDKALQ) are extracellular. N-linked (GlcNAc...) asparagine glycosylation occurs at N423. The helical transmembrane segment at 431–451 (ILVATPVFCYWIFGSMNLISG) threads the bilayer. Topologically, residues 452-483 (YLVHCRTKEILRNSNALSVQQQLQQLSAHSSS) are cytoplasmic. A helical membrane pass occupies residues 484–504 (GIGIFLFIYGLACAMLLLAVI). At 505 to 529 (YEFANIDVWLGSGDTNTPLWPFLLR) the chain is on the extracellular side. A helical membrane pass occupies residues 530–550 (AFMELMLGICCFAWVLGPSIS). Topologically, residues 551 to 705 (TLYKRQVSNG…LQQYGNETLL (155 aa)) are cytoplasmic. Positions 635–681 (RSVHHQQRHSPHHHHHQQQQHHQFHPHHNHQHHSTSSHRLYYPPGSY) are disordered. Basic residues predominate over residues 636–670 (SVHHQQRHSPHHHHHQQQQHHQFHPHHNHQHHSTS). The PDZ-binding signature appears at 703-705 (TLL).

It belongs to the G-protein coupled receptor Fz/Smo family.

It localises to the membrane. In terms of biological role, receptor for Wnt proteins. Most of frizzled receptors are coupled to the beta-catenin canonical signaling pathway, which leads to the activation of disheveled proteins, inhibition of GSK-3 kinase, nuclear accumulation of beta-catenin and activation of Wnt target genes. A second signaling pathway involving PKC and calcium fluxes has been seen for some family members, but it is not yet clear if it represents a distinct pathway or if it can be integrated in the canonical pathway, as PKC seems to be required for Wnt-mediated inactivation of GSK-3 kinase. Both pathways seem to involve interactions with G-proteins. May be involved in transduction and intercellular transmission of polarity information during tissue morphogenesis and/or in differentiated tissues. Required to coordinate the cytoskeletons of epidermal cells to produce a parallel array of cuticular hairs and bristles. This Drosophila melanogaster (Fruit fly) protein is Frizzled-4 (fz4).